A 256-amino-acid polypeptide reads, in one-letter code: uncharacterized protein (256 aa).

The signal sequence occupies residues 1-23 (MKRLNKLVLGIIFLFLVISITAG). Cysteine 24 carries the N-palmitoyl cysteine lipid modification. A lipid anchor (S-diacylglycerol cysteine) is attached at cysteine 24.

Belongs to the staphylococcal tandem lipoprotein family.

The protein localises to the cell membrane. This is an uncharacterized protein from Staphylococcus aureus (strain COL).